A 495-amino-acid polypeptide reads, in one-letter code: Carotenoid 3,4-desaturase (495 aa).

Belongs to the carotenoid/retinoid oxidoreductase family.

It catalyses the reaction dihydroisopentenyldehydrorhodopin + A = isopentenyldehydrorhodopin + AH2. The catalysed reaction is dihydrobisanhydrobacterioruberin + A = bisanhydrobacterioruberin + AH2. It participates in carotenoid biosynthesis. Its function is as follows. Involved in the biosynthesis of the acyclic C50 carotenoid bacterioruberin (BR). CrtD is involved in the desaturation reactions that form double bonds at C-3,4 of dihydroisopentenyldehydrorhodopin (DH-IDR) and C-3',4' of dihydrobisanhydrobacterioruberin (DH-BABR) to yield isopentenyld ehydrorhodopin (IDR) and bisanhydrobacterioruberin (BABR), respectively. This chain is Carotenoid 3,4-desaturase, found in Haloarcula japonica (strain ATCC 49778 / DSM 6131 / JCM 7785 / NBRC 101032 / NCIMB 13157 / TR-1).